The primary structure comprises 536 residues: Probable protein S-acyltransferase 23 (536 aa).

The segment at 1-23 (MDSSEIEVVPLDSNSHQSPTESP) is disordered. Positions 12–23 (DSNSHQSPTESP) are enriched in polar residues. ANK repeat units lie at residues 57–86 (NGFY…DVNS), 90–119 (IQQT…RIEA), 123–153 (NGFR…DYNA), 157–186 (EGRS…CQNR), 190–219 (TGCT…KEEL), and 225–254 (TGST…TRKN). The next 2 helical transmembrane spans lie at 270-290 (YAPM…TSIV) and 298-318 (ITAM…YALI). A DHHC domain is found at 363–413 (QLCPTCKIIRPVRSKHCPTCKRCVEQFDHHCPWISNCVGKKNKRYFLVFVI). Catalysis depends on cysteine 393, which acts as the S-palmitoyl cysteine intermediate. Transmembrane regions (helical) follow at residues 407–427 (YFLV…TTAV) and 454–474 (AAVF…LTIS).

This sequence belongs to the DHHC palmitoyltransferase family. In terms of tissue distribution, expressed in roots, shoots, flowers and pollen.

It is found in the golgi apparatus membrane. It carries out the reaction L-cysteinyl-[protein] + hexadecanoyl-CoA = S-hexadecanoyl-L-cysteinyl-[protein] + CoA. Palmitoyl acyltransferase. The sequence is that of Probable protein S-acyltransferase 23 (PAT23) from Arabidopsis thaliana (Mouse-ear cress).